The following is a 340-amino-acid chain: Phosphate carrier protein, mitochondrial (340 aa).

The transit peptide at 1–27 (MSVFSQLAESSKQNPFSLPVRSGNCAS) directs the protein to the mitochondrion. Solcar repeat units follow at residues 41–125 (KYYA…FKNV), 138–222 (YRTS…TVEA), and 239–317 (EQLV…VKVA). Helical transmembrane passes span 47–67 (ALGGVLSCGITHTAIVPLDLV), 95–114 (RALVKGWAPTLLGYSAQGLG), 141–161 (SLYLAASASAEFFADILLAPM), 200–220 (PLWMRQIPYTMMKFACFEKTV), 241–261 (LVVTFVAGYIAGVFCAIVSHP), and 297–317 (IIMIGTLTALQWFIYDSVKVA).

This sequence belongs to the mitochondrial carrier (TC 2.A.29) family.

It localises to the mitochondrion inner membrane. Its function is as follows. Transport of phosphate groups from the cytosol to the mitochondrial matrix. The polypeptide is Phosphate carrier protein, mitochondrial (Caenorhabditis elegans).